Consider the following 458-residue polypeptide: Cobyrinate a,c-diamide synthase (458 aa).

Residues 254-445 form the GATase cobBQ-type domain; it reads KIGVIRDQVF…IHVHFLSDKS (192 aa). Residue cysteine 335 is the Nucleophile of the active site.

Belongs to the CobB/CbiA family. Mg(2+) is required as a cofactor.

The catalysed reaction is cob(II)yrinate + 2 L-glutamine + 2 ATP + 2 H2O = cob(II)yrinate a,c diamide + 2 L-glutamate + 2 ADP + 2 phosphate + 2 H(+). It participates in cofactor biosynthesis; adenosylcobalamin biosynthesis; cob(II)yrinate a,c-diamide from sirohydrochlorin (anaerobic route): step 10/10. In terms of biological role, catalyzes the ATP-dependent amidation of the two carboxylate groups at positions a and c of cobyrinate, using either L-glutamine or ammonia as the nitrogen source. The polypeptide is Cobyrinate a,c-diamide synthase (Archaeoglobus fulgidus (strain ATCC 49558 / DSM 4304 / JCM 9628 / NBRC 100126 / VC-16)).